The following is a 304-amino-acid chain: uncharacterized protein (304 aa).

It belongs to the mimivirus L137 family.

This is an uncharacterized protein from Acanthamoeba polyphaga mimivirus (APMV).